Here is a 206-residue protein sequence, read N- to C-terminus: Small ribosomal subunit protein uS4 (206 aa).

The S4 RNA-binding domain occupies 93 to 153 (TRLDALVLRA…PKSQTMVPFQ (61 aa)).

The protein belongs to the universal ribosomal protein uS4 family. As to quaternary structure, part of the 30S ribosomal subunit. Contacts protein S5. The interaction surface between S4 and S5 is involved in control of translational fidelity.

One of the primary rRNA binding proteins, it binds directly to 16S rRNA where it nucleates assembly of the body of the 30S subunit. In terms of biological role, with S5 and S12 plays an important role in translational accuracy. The chain is Small ribosomal subunit protein uS4 from Bifidobacterium animalis subsp. lactis (strain AD011).